Consider the following 708-residue polypeptide: Nucleolar protein 11-like (708 aa).

The protein resides in the nucleus. Its subcellular location is the nucleolus. Functionally, ribosome biogenesis factor. May be required for both optimal rDNA transcription and pre-rRNA processing. This is Nucleolar protein 11-like (nol11) from Danio rerio (Zebrafish).